A 200-amino-acid chain; its full sequence is UPF0316 protein Mhun_0543 (200 aa).

3 helical membrane-spanning segments follow: residues 3–23, 44–64, and 71–91; these read VGFL…IFLA, FIAP…IGQV, and PICY…GMEL.

It belongs to the UPF0316 family.

The protein localises to the cell membrane. This Methanospirillum hungatei JF-1 (strain ATCC 27890 / DSM 864 / NBRC 100397 / JF-1) protein is UPF0316 protein Mhun_0543.